The primary structure comprises 130 residues: Small ribosomal subunit protein uS11 (130 aa).

The protein belongs to the universal ribosomal protein uS11 family. In terms of assembly, part of the 30S ribosomal subunit. Interacts with proteins S7 and S18. Binds to IF-3.

Its function is as follows. Located on the platform of the 30S subunit, it bridges several disparate RNA helices of the 16S rRNA. Forms part of the Shine-Dalgarno cleft in the 70S ribosome. The chain is Small ribosomal subunit protein uS11 from Phytoplasma mali (strain AT).